The primary structure comprises 292 residues: Protoheme IX farnesyltransferase (292 aa).

9 helical membrane passes run 11–31 (FGIVVFSVLAGLAGYATGFQI), 37–57 (WKIFLETLLGIYFLSSGSLAL), 85–105 (AAAGILSVGLLLVGMNMLFKL), 108–128 (VAGWVGLFCVFLYNGPYTLWW), 133–153 (VFAAVPGAIPGALPVTIGYAV), 163–183 (SLYLFLIMFLWQMPHFWVLAI), 199–219 (VALGMEKTMFQVGLYTLVYVG), 223–243 (AAPMFVHASWMFVLLTFPFVF), and 261–281 (WLAFFMWLNVSMLVFIIIPVI).

It belongs to the UbiA prenyltransferase family. Protoheme IX farnesyltransferase subfamily.

It localises to the cell inner membrane. The catalysed reaction is heme b + (2E,6E)-farnesyl diphosphate + H2O = Fe(II)-heme o + diphosphate. Its pathway is porphyrin-containing compound metabolism; heme O biosynthesis; heme O from protoheme: step 1/1. Its function is as follows. Converts heme B (protoheme IX) to heme O by substitution of the vinyl group on carbon 2 of heme B porphyrin ring with a hydroxyethyl farnesyl side group. This Bdellovibrio bacteriovorus (strain ATCC 15356 / DSM 50701 / NCIMB 9529 / HD100) protein is Protoheme IX farnesyltransferase.